A 92-amino-acid polypeptide reads, in one-letter code: YcgL domain-containing protein Sbal_1869 (92 aa).

The YcgL domain occupies 1-85; sequence MLCAVYKSSR…PQVNLLAEHK (85 aa).

The sequence is that of YcgL domain-containing protein Sbal_1869 from Shewanella baltica (strain OS155 / ATCC BAA-1091).